Here is a 579-residue protein sequence, read N- to C-terminus: Putative ABC transporter ATP-binding protein VPA1482 (579 aa).

2 consecutive ABC transporter domains span residues I3–E244 and L299–T533. Residues G37–S44 and G332–S339 each bind ATP.

This sequence belongs to the ABC transporter superfamily.

Its subcellular location is the cell inner membrane. Its function is as follows. Probably part of an ABC transporter complex. Responsible for energy coupling to the transport system. The sequence is that of Putative ABC transporter ATP-binding protein VPA1482 from Vibrio parahaemolyticus serotype O3:K6 (strain RIMD 2210633).